The sequence spans 302 residues: Bifunctional protein FolD (302 aa).

NADP(+)-binding positions include 165-167, S190, and I231; that span reads GRS.

It belongs to the tetrahydrofolate dehydrogenase/cyclohydrolase family. In terms of assembly, homodimer.

The enzyme catalyses (6R)-5,10-methylene-5,6,7,8-tetrahydrofolate + NADP(+) = (6R)-5,10-methenyltetrahydrofolate + NADPH. It carries out the reaction (6R)-5,10-methenyltetrahydrofolate + H2O = (6R)-10-formyltetrahydrofolate + H(+). It participates in one-carbon metabolism; tetrahydrofolate interconversion. Its function is as follows. Catalyzes the oxidation of 5,10-methylenetetrahydrofolate to 5,10-methenyltetrahydrofolate and then the hydrolysis of 5,10-methenyltetrahydrofolate to 10-formyltetrahydrofolate. The chain is Bifunctional protein FolD from Prochlorococcus marinus (strain MIT 9211).